We begin with the raw amino-acid sequence, 397 residues long: Odorant receptor 85a (397 aa).

The Cytoplasmic portion of the chain corresponds to 1–46 (MIFKYIQEPVLGSLFRSRDSLIYLNRSIDQMGWRLPPRTKPYWWLY). Residues 47–67 (YIWTLVVIVLVFIFIPYGLIM) traverse the membrane as a helical segment. The Extracellular portion of the chain corresponds to 68 to 83 (TGIKEFKNFTTTDLFT). Asn75 carries N-linked (GlcNAc...) asparagine glycosylation. Residues 84–104 (YVQVPVNTNASIMKGIIVLFM) form a helical membrane-spanning segment. At 105 to 142 (RRRFSRAQKMMDAMDIRCTKMEEKVQVHRAAALCNRVV) the chain is on the cytoplasmic side. Residues 143–163 (VIYHCIYFGYLSMALTGALVI) traverse the membrane as a helical segment. The Extracellular portion of the chain corresponds to 164–192 (GKTPFCLYNPLVNPDDHFYLATAIESVTM). The chain crosses the membrane as a helical span at residues 193-213 (AGIILANLILDVYPIIYVVVL). Topologically, residues 214–262 (RIHMELLSERIKTLRTDVEKGDDQHYAELVECVKDHKLIVEYGNTLRPM) are cytoplasmic. Residues 263 to 283 (ISATMFIQLLSVGLLLGLAAV) form a helical membrane-spanning segment. The Extracellular segment spans residues 284–294 (SMQFYNTVMER). Residues 295–315 (VVSGVYTIAILSQTFPFCYVC) form a helical membrane-spanning segment. Residues 316–347 (EQLSSDCESLTNTLFHSKWIGAERRYRTTMLY) lie on the Cytoplasmic side of the membrane. A helical transmembrane segment spans residues 348–368 (FIHNVQQSILFTAGGIFPICL). Topologically, residues 369-397 (NTNIKMAKFAFSVVTIVNEMDLAEKLRRE) are extracellular.

This sequence belongs to the insect chemoreceptor superfamily. Heteromeric odorant receptor channel (TC 1.A.69) family. Or2a subfamily. Interacts with Orco. Complexes exist early in the endomembrane system in olfactory sensory neurons (OSNs), coupling these complexes to the conserved ciliary trafficking pathway. In terms of tissue distribution, expressed in olfactory sensory neurons in the antenna.

The protein localises to the cell membrane. In terms of biological role, odorant receptor which mediates acceptance or avoidance behavior, depending on its substrates. The odorant receptor repertoire encodes a large collection of odor stimuli that vary widely in identity, intensity, and duration. May form a complex with Orco to form odorant-sensing units, providing sensitive and prolonged odorant signaling and calcium permeability. The protein is Odorant receptor 85a (Or85a) of Drosophila melanogaster (Fruit fly).